The chain runs to 154 residues: Protein AE7-like 1 (154 aa).

This sequence belongs to the MIP18 family.

Functionally, may play a role in chromosome segregation through establishment of sister chromatid cohesion. Unable to complement ae7 mutants, and thus probably not involved in the cytosolic iron-sulfur assembly (CIA) pathway. This chain is Protein AE7-like 1, found in Arabidopsis thaliana (Mouse-ear cress).